A 268-amino-acid chain; its full sequence is Phosphatidylglycerol--prolipoprotein diacylglyceryl transferase (268 aa).

Transmembrane regions (helical) follow at residues 27-47 (PALR…MWLL), 66-86 (LLFY…VLFY), 104-124 (GGMS…YIAW), 130-150 (FFAV…AGRI), 181-201 (PSQL…LYWF), 208-228 (VGAV…IVET), and 242-262 (FMTM…YLIL). Residue Arg149 coordinates a 1,2-diacyl-sn-glycero-3-phospho-(1'-sn-glycerol).

Belongs to the Lgt family.

The protein localises to the cell inner membrane. It catalyses the reaction L-cysteinyl-[prolipoprotein] + a 1,2-diacyl-sn-glycero-3-phospho-(1'-sn-glycerol) = an S-1,2-diacyl-sn-glyceryl-L-cysteinyl-[prolipoprotein] + sn-glycerol 1-phosphate + H(+). It participates in protein modification; lipoprotein biosynthesis (diacylglyceryl transfer). Catalyzes the transfer of the diacylglyceryl group from phosphatidylglycerol to the sulfhydryl group of the N-terminal cysteine of a prolipoprotein, the first step in the formation of mature lipoproteins. The chain is Phosphatidylglycerol--prolipoprotein diacylglyceryl transferase from Shewanella sp. (strain MR-4).